We begin with the raw amino-acid sequence, 343 residues long: DNA repair and recombination protein RadA (343 aa).

Residue 107-114 (GEFGAGKS) participates in ATP binding.

The protein belongs to the eukaryotic RecA-like protein family.

Functionally, involved in DNA repair and in homologous recombination. Binds and assemble on single-stranded DNA to form a nucleoprotein filament. Hydrolyzes ATP in a ssDNA-dependent manner and promotes DNA strand exchange between homologous DNA molecules. The protein is DNA repair and recombination protein RadA of Haloquadratum walsbyi (strain DSM 16790 / HBSQ001).